The following is a 135-amino-acid chain: Transcription antitermination protein NusB (135 aa).

This sequence belongs to the NusB family.

Involved in transcription antitermination. Required for transcription of ribosomal RNA (rRNA) genes. Binds specifically to the boxA antiterminator sequence of the ribosomal RNA (rrn) operons. The protein is Transcription antitermination protein NusB of Nocardioides sp. (strain ATCC BAA-499 / JS614).